The following is a 447-amino-acid chain: ATP-dependent protease ATPase subunit HslU (447 aa).

Residues isoleucine 18, 60–65, aspartate 259, glutamate 325, and arginine 397 contribute to the ATP site; that span reads GVGKTE.

This sequence belongs to the ClpX chaperone family. HslU subfamily. In terms of assembly, a double ring-shaped homohexamer of HslV is capped on each side by a ring-shaped HslU homohexamer. The assembly of the HslU/HslV complex is dependent on binding of ATP.

The protein resides in the cytoplasm. Functionally, ATPase subunit of a proteasome-like degradation complex; this subunit has chaperone activity. The binding of ATP and its subsequent hydrolysis by HslU are essential for unfolding of protein substrates subsequently hydrolyzed by HslV. HslU recognizes the N-terminal part of its protein substrates and unfolds these before they are guided to HslV for hydrolysis. The sequence is that of ATP-dependent protease ATPase subunit HslU from Burkholderia ambifaria (strain MC40-6).